Reading from the N-terminus, the 144-residue chain is Large ribosomal subunit protein uL16 (144 aa).

This sequence belongs to the universal ribosomal protein uL16 family. Part of the 50S ribosomal subunit.

Functionally, binds 23S rRNA and is also seen to make contacts with the A and possibly P site tRNAs. The polypeptide is Large ribosomal subunit protein uL16 (Bacillus anthracis (strain A0248)).